The primary structure comprises 254 residues: Leucyl/phenylalanyl-tRNA--protein transferase (254 aa).

This sequence belongs to the L/F-transferase family.

It localises to the cytoplasm. It catalyses the reaction N-terminal L-lysyl-[protein] + L-leucyl-tRNA(Leu) = N-terminal L-leucyl-L-lysyl-[protein] + tRNA(Leu) + H(+). The enzyme catalyses N-terminal L-arginyl-[protein] + L-leucyl-tRNA(Leu) = N-terminal L-leucyl-L-arginyl-[protein] + tRNA(Leu) + H(+). It carries out the reaction L-phenylalanyl-tRNA(Phe) + an N-terminal L-alpha-aminoacyl-[protein] = an N-terminal L-phenylalanyl-L-alpha-aminoacyl-[protein] + tRNA(Phe). Functions in the N-end rule pathway of protein degradation where it conjugates Leu, Phe and, less efficiently, Met from aminoacyl-tRNAs to the N-termini of proteins containing an N-terminal arginine or lysine. This Burkholderia multivorans (strain ATCC 17616 / 249) protein is Leucyl/phenylalanyl-tRNA--protein transferase.